The following is a 196-amino-acid chain: Putative 3-methyladenine DNA glycosylase (196 aa).

Belongs to the DNA glycosylase MPG family.

This Chlorobium phaeovibrioides (strain DSM 265 / 1930) (Prosthecochloris vibrioformis (strain DSM 265)) protein is Putative 3-methyladenine DNA glycosylase.